Consider the following 338-residue polypeptide: GTPase Obg (338 aa).

Residues Met-1–Met-159 form the Obg domain. The region spanning Ala-160–Trp-331 is the OBG-type G domain. GTP-binding positions include Gly-166–Ser-173, Phe-191–Lys-195, Asp-213–Gly-216, Thr-283–Asp-286, and Ser-312–Ala-314. 2 residues coordinate Mg(2+): Ser-173 and Thr-193.

It belongs to the TRAFAC class OBG-HflX-like GTPase superfamily. OBG GTPase family. As to quaternary structure, monomer. The cofactor is Mg(2+).

It is found in the cytoplasm. In terms of biological role, an essential GTPase which binds GTP, GDP and possibly (p)ppGpp with moderate affinity, with high nucleotide exchange rates and a fairly low GTP hydrolysis rate. Plays a role in control of the cell cycle, stress response, ribosome biogenesis and in those bacteria that undergo differentiation, in morphogenesis control. This is GTPase Obg from Pelobacter propionicus (strain DSM 2379 / NBRC 103807 / OttBd1).